We begin with the raw amino-acid sequence, 213 residues long: Pyrrolidone-carboxylate peptidase (213 aa).

Catalysis depends on residues glutamate 78, cysteine 141, and histidine 165.

It belongs to the peptidase C15 family. In terms of assembly, homotetramer.

Its subcellular location is the cytoplasm. The catalysed reaction is Release of an N-terminal pyroglutamyl group from a polypeptide, the second amino acid generally not being Pro.. Removes 5-oxoproline from various penultimate amino acid residues except L-proline. In Enterococcus faecalis (strain ATCC 700802 / V583), this protein is Pyrrolidone-carboxylate peptidase.